Consider the following 64-residue polypeptide: Cytochrome c oxidase subunit 9, mitochondrial (64 aa).

Over 1 to 15 (MAATAVRPITGMLRR) the chain is Mitochondrial matrix. The helical transmembrane segment at 16 to 36 (GLILDIGIALGVGFVMANGYW) threads the bilayer. Residues 37 to 64 (YGYHMPRTNARDNYYKKLEEERAARMGA) are Mitochondrial intermembrane-facing.

The protein belongs to the fungal cytochrome c oxidase subunit 7a family. Component of the cytochrome c oxidase (complex IV, CIV), a multisubunit enzyme composed of 11 subunits. The complex is composed of a catalytic core of 3 subunits Cox1, Cox2 and Cox3, encoded in the mitochondrial DNA, and 8 supernumerary subunits Cox4, Cox5a/Cox5, Cox6, Cox7, Cox8, Cox7a/Cox9, Cox6b/Cox12 and Cox6a/Cox13, which are encoded in the nuclear genome. The complex exists as a monomer or a dimer and forms respiratory supercomplexes (SCs) in the inner mitochondrial membrane with NADH-ubiquinone oxidoreductase (complex I, CI) and ubiquinol-cytochrome c oxidoreductase (cytochrome b-c1 complex, complex III, CIII), resulting in various different assemblies (supercomplexes I(1)IV(1), I(1)III(3)IV(2), III(2)IV(1) and III(2)IV(2) as well as larger supercomplexes of compositions like I(1)III(2)IV(5-6)).

It localises to the mitochondrion inner membrane. It functions in the pathway energy metabolism; oxidative phosphorylation. Component of the cytochrome c oxidase, the last enzyme in the mitochondrial electron transport chain which drives oxidative phosphorylation. The respiratory chain contains 3 multisubunit complexes succinate dehydrogenase (complex II, CII), ubiquinol-cytochrome c oxidoreductase (cytochrome b-c1 complex, complex III, CIII) and cytochrome c oxidase (complex IV, CIV), that cooperate to transfer electrons derived from NADH and succinate to molecular oxygen, creating an electrochemical gradient over the inner membrane that drives transmembrane transport and the ATP synthase. Cytochrome c oxidase is the component of the respiratory chain that catalyzes the reduction of oxygen to water. Electrons originating from reduced cytochrome c in the intermembrane space (IMS) are transferred via the dinuclear copper A center (CU(A)) of Cox2 and heme A of Cox1 to the active site in Cox1, a binuclear center (BNC) formed by heme A3 and copper B (CU(B)). The BNC reduces molecular oxygen to 2 water molecules using 4 electrons from cytochrome c in the IMS and 4 protons from the mitochondrial matrix. This is Cytochrome c oxidase subunit 9, mitochondrial (cox-17) from Neurospora crassa (strain ATCC 24698 / 74-OR23-1A / CBS 708.71 / DSM 1257 / FGSC 987).